The chain runs to 175 residues: General stress protein 14 (175 aa).

It belongs to the NAD(P)H dehydrogenase (quinone) family.

This chain is General stress protein 14 (ywrO), found in Bacillus subtilis (strain 168).